We begin with the raw amino-acid sequence, 457 residues long: F-box/LRR-repeat protein At3g62440 (457 aa).

Residues 1–49 (MDRISNLPDEIICHIGSFLSAREAAFTTVLSKRWHNLFTIVPDLHFDSS) form the F-box domain. LRR repeat units lie at residues 53 to 79 (GESL…SLKW), 147 to 174 (LSLG…SLYH), 177 to 202 (FYEF…TVCG), 229 to 254 (WDAF…YYSD), 283 to 310 (WGKG…NLYT), and 337 to 362 (LSNF…NIDG).

The chain is F-box/LRR-repeat protein At3g62440 from Arabidopsis thaliana (Mouse-ear cress).